The primary structure comprises 500 residues: Aspartyl/glutamyl-tRNA(Asn/Gln) amidotransferase subunit B (500 aa).

Belongs to the GatB/GatE family. GatB subfamily. In terms of assembly, heterotrimer of A, B and C subunits.

It catalyses the reaction L-glutamyl-tRNA(Gln) + L-glutamine + ATP + H2O = L-glutaminyl-tRNA(Gln) + L-glutamate + ADP + phosphate + H(+). The catalysed reaction is L-aspartyl-tRNA(Asn) + L-glutamine + ATP + H2O = L-asparaginyl-tRNA(Asn) + L-glutamate + ADP + phosphate + 2 H(+). Its function is as follows. Allows the formation of correctly charged Asn-tRNA(Asn) or Gln-tRNA(Gln) through the transamidation of misacylated Asp-tRNA(Asn) or Glu-tRNA(Gln) in organisms which lack either or both of asparaginyl-tRNA or glutaminyl-tRNA synthetases. The reaction takes place in the presence of glutamine and ATP through an activated phospho-Asp-tRNA(Asn) or phospho-Glu-tRNA(Gln). This is Aspartyl/glutamyl-tRNA(Asn/Gln) amidotransferase subunit B from Sinorhizobium medicae (strain WSM419) (Ensifer medicae).